Consider the following 444-residue polypeptide: Vacuolar protein sorting-associated protein 4B (444 aa).

Residues 4–82 enclose the MIT domain; sequence TNTNLQKAID…KEYLKKKEKK (79 aa). Positions 19-82 form a coiled coil; the sequence is AQEDKAGNYE…KEYLKKKEKK (64 aa). The disordered stretch occupies residues 77-118; the sequence is KKKEKKPQKPVKEEQSGPVDEKGNDSDGEAESDDPEKKKLQN. Basic and acidic residues predominate over residues 86-101; that stretch reads PVKEEQSGPVDEKGND. Phosphoserine occurs at positions 102 and 108. Residue 174–181 coordinates ATP; it reads GPPGTGKS. Ser410 is modified (phosphoserine).

Belongs to the AAA ATPase family. As to quaternary structure, proposed to be monomeric or homodimeric in nucleotide-free form and to oligomerize upon binding to ATP to form two stacked hexameric or heptameric rings with a central pore through which ESCRT-III substrates are translocated in an ATP-dependent manner. In vitro, associates on the inside of a helical tubular structure formed by a CHMP2A-CHMP3 polymer. Interacts with CHMP1A, CHMP1B, CHMP4B and CHMP6. Interacts with CHMP2A. Interacts with VPS4A; the interaction suggests a heteromeric assembly with VPS4A. Interacts with VTA1. High level expression seen in the kidney. It is also expressed in the heart, brain, spleen, lung, liver, skeletal muscle, and testis.

The protein resides in the late endosome membrane. The enzyme catalyses ATP + H2O = ADP + phosphate + H(+). Functionally, involved in late steps of the endosomal multivesicular bodies (MVB) pathway. Recognizes membrane-associated ESCRT-III assemblies and catalyzes their disassembly, possibly in combination with membrane fission. Redistributes the ESCRT-III components to the cytoplasm for further rounds of MVB sorting. MVBs contain intraluminal vesicles (ILVs) that are generated by invagination and scission from the limiting membrane of the endosome and mostly are delivered to lysosomes enabling degradation of membrane proteins, such as stimulated growth factor receptors, lysosomal enzymes and lipids. VPS4A/B are required for the exosomal release of SDCBP, CD63 and syndecan. In terms of biological role, (Microbial infection) In conjunction with the ESCRT machinery also appears to function in topologically equivalent membrane fission events, such as the terminal stages of cytokinesis and enveloped virus budding (lentiviruses). This chain is Vacuolar protein sorting-associated protein 4B, found in Mus musculus (Mouse).